The primary structure comprises 382 residues: Farnesyl diphosphate synthase (382 aa).

Residues Lys-81, Arg-84, and Gln-120 each contribute to the isopentenyl diphosphate site. Residues Asp-127 and Asp-131 each coordinate Mg(2+). Arg-136 contacts dimethylallyl diphosphate. Residue Arg-137 coordinates isopentenyl diphosphate. Residues Lys-230, Thr-231, Gln-270, Lys-287, and Lys-296 each coordinate dimethylallyl diphosphate.

This sequence belongs to the FPP/GGPP synthase family. Mg(2+) serves as cofactor.

The protein localises to the cytoplasm. It carries out the reaction isopentenyl diphosphate + dimethylallyl diphosphate = (2E)-geranyl diphosphate + diphosphate. It catalyses the reaction isopentenyl diphosphate + (2E)-geranyl diphosphate = (2E,6E)-farnesyl diphosphate + diphosphate. Its pathway is isoprenoid biosynthesis; farnesyl diphosphate biosynthesis; farnesyl diphosphate from geranyl diphosphate and isopentenyl diphosphate: step 1/1. The protein operates within isoprenoid biosynthesis; geranyl diphosphate biosynthesis; geranyl diphosphate from dimethylallyl diphosphate and isopentenyl diphosphate: step 1/1. Inhibited by aminobisphosphonate drugs (aBP), such as risedronate and alendronate. In terms of biological role, key enzyme in isoprenoid biosynthesis which catalyzes the formation of farnesyl diphosphate (FPP), a sterol precursor. Involved in the inhibition of cell growth. This chain is Farnesyl diphosphate synthase (fps), found in Dictyostelium discoideum (Social amoeba).